The sequence spans 358 residues: Biotin synthase (358 aa).

The Radical SAM core domain maps to 44-272 (NRVRLNYLVN…DSEVRAAAGR (229 aa)). Residues cysteine 59, cysteine 63, and cysteine 66 each coordinate [4Fe-4S] cluster. [2Fe-2S] cluster contacts are provided by cysteine 103, cysteine 136, cysteine 196, and arginine 267.

It belongs to the radical SAM superfamily. Biotin synthase family. As to quaternary structure, homodimer. [4Fe-4S] cluster is required as a cofactor. [2Fe-2S] cluster serves as cofactor.

It carries out the reaction (4R,5S)-dethiobiotin + (sulfur carrier)-SH + 2 reduced [2Fe-2S]-[ferredoxin] + 2 S-adenosyl-L-methionine = (sulfur carrier)-H + biotin + 2 5'-deoxyadenosine + 2 L-methionine + 2 oxidized [2Fe-2S]-[ferredoxin]. It participates in cofactor biosynthesis; biotin biosynthesis; biotin from 7,8-diaminononanoate: step 2/2. Its function is as follows. Catalyzes the conversion of dethiobiotin (DTB) to biotin by the insertion of a sulfur atom into dethiobiotin via a radical-based mechanism. This chain is Biotin synthase, found in Cutibacterium acnes (strain DSM 16379 / KPA171202) (Propionibacterium acnes).